The chain runs to 1040 residues: Desmoglein-4 (1040 aa).

An N-terminal signal peptide occupies residues 1-23 (MDWLLFRNICLLILFMVVLGVNS). Positions 24–49 (EFIVEVKELDIENGTTTWQTVRRQKR) are excised as a propeptide. 4 Cadherin domains span residues 50 to 157 (EWIK…PPVF), 158 to 269 (TQNV…FPIL), 270 to 385 (EKTS…GPTF), and 389 to 497 (SMTF…CPVI). Residues 50–633 (EWIKFAAACR…RQSNVGLGPA (584 aa)) lie on the Extracellular side of the membrane. Asn110 is a glycosylation site (N-linked (GlcNAc...) asparagine). N-linked (GlcNAc...) asparagine glycosylation occurs at Asn545. A helical transmembrane segment spans residues 634-654 (GIGMIILGLLLLFLSPLLLLM). Over 655–1040 (CCCKRRQPEG…RYSNIHYSRQ (386 aa)) the chain is Cytoplasmic. Desmoglein repeat repeat units follow at residues 883-909 (TLSE…IVTE) and 910-940 (TYTA…ETVM). Residues 1015-1040 (QTTRSTSPMTSQHRVTRYSNIHYSRQ) are disordered.

In terms of assembly, interacts with JUP.

Its subcellular location is the cell membrane. It localises to the cell junction. The protein localises to the desmosome. A component of desmosome cell-cell junctions which are required for positive regulation of cellular adhesion. Coordinates the transition from proliferation to differentiation in hair follicle keratinocytes. Plays a role in moderating lymphocyte migration to inflamed skin and maintaining homeostasis of the epidermal inflammatory response. The chain is Desmoglein-4 (Dsg4) from Rattus norvegicus (Rat).